The primary structure comprises 83 residues: Early lactation protein (83 aa).

3 N-linked (GlcNAc...) asparagine glycosylation sites follow: Asn-14, Asn-31, and Asn-42. Residues 23–73 (CLLPPVRGNCSSQILHYFYNTTSRTCETFIYSGCNGNRNNFNSEEYCLKTC) form the BPTI/Kunitz inhibitor domain. Intrachain disulfides connect Cys-23–Cys-73, Cys-32–Cys-56, and Cys-48–Cys-69.

N-glycosylated. Found in the whey fraction of milk.

It is found in the secreted. This Notamacropus eugenii (Tammar wallaby) protein is Early lactation protein (ELP).